Reading from the N-terminus, the 110-residue chain is UPF0122 protein SPG_1182 (110 aa).

This sequence belongs to the UPF0122 family.

Might take part in the signal recognition particle (SRP) pathway. This is inferred from the conservation of its genetic proximity to ftsY/ffh. May be a regulatory protein. This is UPF0122 protein SPG_1182 from Streptococcus pneumoniae serotype 19F (strain G54).